The following is a 689-amino-acid chain: FACT complex subunit ssrp1-B (689 aa).

Disordered stretches follow at residues 434–565 and 592–689; these read DNKS…KRAT and KAGA…GESD. A compositionally biased stretch (acidic residues) spans 461–477; the sequence is EQDDDSDDESTDEDYDL. 4 stretches are compositionally biased toward basic and acidic residues: residues 478–491, 523–532, 538–563, and 601–628; these read DKDM…KDSS, IEPKKKESKE, EKKE…EPKR, and SADD…EYKK. Residues 561-627 constitute a DNA-binding region (HMG box); it reads PKRATTAYII…RYEAEMKEYK (67 aa). Over residues 638-650 the composition is skewed to polar residues; that stretch reads GPSTKKSSDQSPG.

The protein belongs to the SSRP1 family. In terms of assembly, component of the FACT complex, a stable heterodimer of hmg-3 and spt-16. The FACT complex may also include hmg-4 instead of hmg-3. In terms of tissue distribution, expressed in the germline.

It is found in the nucleus. Its subcellular location is the chromosome. In terms of biological role, component of the FACT complex, a general chromatin factor that acts to reorganize nucleosomes. The FACT complex is involved in multiple processes that require DNA as a template such as mRNA elongation, DNA replication and DNA repair. During transcription elongation the FACT complex acts as a histone chaperone that both destabilizes and restores nucleosomal structure. It facilitates the passage of RNA polymerase II and transcription by promoting the dissociation of one histone H2A-H2B dimer from the nucleosome, then subsequently promotes the reestablishment of the nucleosome following the passage of RNA polymerase II. Binds specifically to double-stranded DNA. In embryos, may function redundantly with hmg-4 to promote cell cycle progression and development of the anterior pharynx. In the germline, acts non-redundantly with hmg-4 to play a role in oocyte development. This Caenorhabditis elegans protein is FACT complex subunit ssrp1-B.